The following is a 1127-amino-acid chain: DNA-directed RNA polymerase I subunit RPA2 homolog (1127 aa).

Position 1025 is a phosphoserine (Ser-1025).

The protein belongs to the RNA polymerase beta chain family. In terms of assembly, component of the RNA polymerase I (Pol I) complex consisting of at least 13 subunits.

Its subcellular location is the nucleus. The protein resides in the nucleolus. The enzyme catalyses RNA(n) + a ribonucleoside 5'-triphosphate = RNA(n+1) + diphosphate. Its activity is regulated as follows. Antisense ribosomal siRNAs silence rRNA expression during the elongation phase by decreasing rpoa-2 occupancy downstream of the RNAi-targeted region in nrde-2-dependent manner. DNA-dependent RNA polymerase catalyzes the transcription of DNA into RNA using the four ribonucleoside triphosphates as substrates. Second largest core component of RNA polymerase I which synthesizes ribosomal RNA precursors. Proposed to contribute to the polymerase catalytic activity and forms the polymerase active center together with the largest subunit. Pol I is composed of mobile elements and RPA2 is part of the core element with the central large cleft and probably a clamp element that moves to open and close the cleft. Specifically binds to 18S, 5.8S and 26S rDNA, but not to 5S rDNA. This Caenorhabditis elegans protein is DNA-directed RNA polymerase I subunit RPA2 homolog.